The chain runs to 276 residues: MKIRRYLVPNLIAWSIGIAWLIPFMGVLMASVRPYEEIVSGWWHLHPFTITLKNYINALNHPMFPIGEGLKNSLIVAIPSTIVPVIVASLAAYAFARYSFPIKHYLFAFIVLLMALPQQMTVVPLYFLLRNAHLLNTFRGLIIVHSAWGLAWIIFFMRNYFSMLPTDVEEAAKIDGATDFQIFYKIVLPMALPGLISASILQFTWVWSDFFLALVFLQNPEKYVATQRLPLLRGQYFVDWGLLTAASIMVMLVPLLVYALFQKYYISGMIGWSVEK.

The next 6 membrane-spanning stretches (helical) occupy residues 12–32, 75–95, 109–129, 137–157, 186–206, and 241–261; these read IAWS…MASV, IVAI…AYAF, FIVL…YFLL, TFRG…IFFM, IVLP…FTWV, and GLLT…YALF. One can recognise an ABC transmembrane type-1 domain in the interval 70–261; the sequence is LKNSLIVAIP…LVPLLVYALF (192 aa).

Belongs to the binding-protein-dependent transport system permease family. MalFG subfamily.

The protein localises to the cell membrane. Functionally, probably part of a binding-protein-dependent transport system PH1036/38/39. Probably responsible for the translocation of the substrate across the membrane. This chain is Probable ABC transporter permease protein PH1036, found in Pyrococcus horikoshii (strain ATCC 700860 / DSM 12428 / JCM 9974 / NBRC 100139 / OT-3).